The following is a 302-amino-acid chain: Riboflavin transporter (302 aa).

8 helical membrane-spanning segments follow: residues A16–V36, L44–L64, V87–W107, A109–G129, I158–I178, I191–A213, G227–A247, and G264–L284. 2 consecutive EamA domains span residues F30–L151 and L170–M291.

It belongs to the drug/metabolite transporter (DMT) superfamily. 10 TMS drug/metabolite exporter (DME) (TC 2.A.7.3) family.

It localises to the cell membrane. Functionally, transports riboflavin into the cell. Can also transport FMN and FAD. Required for normal nodule development during colonization of pea plant roots. The polypeptide is Riboflavin transporter (Rhizobium johnstonii (strain DSM 114642 / LMG 32736 / 3841) (Rhizobium leguminosarum bv. viciae)).